Here is a 428-residue protein sequence, read N- to C-terminus: Trigger factor (428 aa).

The PPIase FKBP-type domain maps to Lys163–Pro248.

Belongs to the FKBP-type PPIase family. Tig subfamily.

The protein localises to the cytoplasm. It catalyses the reaction [protein]-peptidylproline (omega=180) = [protein]-peptidylproline (omega=0). In terms of biological role, involved in protein export. Acts as a chaperone by maintaining the newly synthesized protein in an open conformation. Functions as a peptidyl-prolyl cis-trans isomerase. This chain is Trigger factor, found in Lachnoclostridium phytofermentans (strain ATCC 700394 / DSM 18823 / ISDg) (Clostridium phytofermentans).